The primary structure comprises 239 residues: 1-(5-phosphoribosyl)-5-[(5-phosphoribosylamino)methylideneamino] imidazole-4-carboxamide isomerase (239 aa).

Asp8 functions as the Proton acceptor in the catalytic mechanism. The active-site Proton donor is the Asp129.

It belongs to the HisA/HisF family.

It localises to the cytoplasm. The enzyme catalyses 1-(5-phospho-beta-D-ribosyl)-5-[(5-phospho-beta-D-ribosylamino)methylideneamino]imidazole-4-carboxamide = 5-[(5-phospho-1-deoxy-D-ribulos-1-ylimino)methylamino]-1-(5-phospho-beta-D-ribosyl)imidazole-4-carboxamide. The protein operates within amino-acid biosynthesis; L-histidine biosynthesis; L-histidine from 5-phospho-alpha-D-ribose 1-diphosphate: step 4/9. This chain is 1-(5-phosphoribosyl)-5-[(5-phosphoribosylamino)methylideneamino] imidazole-4-carboxamide isomerase, found in Cereibacter sphaeroides (strain ATCC 17025 / ATH 2.4.3) (Rhodobacter sphaeroides).